A 651-amino-acid polypeptide reads, in one-letter code: Peptide-N(4)-(N-acetyl-beta-glucosaminyl)asparagine amidase (651 aa).

Residue Ala-2 is modified to N-acetylalanine. Residues 30–91 form the PUB domain; that stretch reads EASKLLLTYA…EGETHLIFPK (62 aa). The Zn(2+) site is built by Cys-247, Cys-250, Cys-280, and Cys-283. The active-site Nucleophile is the Cys-306. Active-site residues include His-333 and Asp-350. Residues 451–651 form the PAW domain; it reads ELGGRVSGSL…LEIIITFNDL (201 aa).

This sequence belongs to the transglutaminase-like superfamily. PNGase family. In terms of assembly, component of a complex required to couple retrotranslocation, ubiquitination and deglycosylation composed of NGLY1, SAKS1, AMFR, VCP and RAD23B. Interacts with the proteasome components RAD23B and PSMC1. Interacts with directly with VCP. Interacts with DERL1, bringing it close to the endoplasmic reticulum membrane. Interacts with SAKS1. Requires Zn(2+) as cofactor. Ubiquitously expressed with highest level in testis.

Its subcellular location is the cytoplasm. The catalysed reaction is Hydrolysis of an N(4)-(acetyl-beta-D-glucosaminyl)asparagine residue in which the glucosamine residue may be further glycosylated, to yield a (substituted) N-acetyl-beta-D-glucosaminylamine and a peptide containing an aspartate residue.. Inhibited by Z-VAD-fmk, a well-known caspase inhibitor, which inhibits enzyme activity through covalent binding of the carbohydrate to the single Cys-306 residue. In terms of biological role, specifically deglycosylates the denatured form of N-linked glycoproteins in the cytoplasm and assists their proteasome-mediated degradation. Cleaves the beta-aspartyl-glucosamine (GlcNAc) of the glycan and the amide side chain of Asn, converting Asn to Asp. Prefers proteins containing high-mannose over those bearing complex type oligosaccharides. Can recognize misfolded proteins in the endoplasmic reticulum that are exported to the cytosol to be destroyed and deglycosylate them, while it has no activity toward native proteins. Deglycosylation is a prerequisite for subsequent proteasome-mediated degradation of some, but not all, misfolded glycoproteins. The polypeptide is Peptide-N(4)-(N-acetyl-beta-glucosaminyl)asparagine amidase (Ngly1) (Mus musculus (Mouse)).